The chain runs to 164 residues: Monothiol glutaredoxin-S10 (164 aa).

Positions 60 to 161 (EDSVKRTLAD…TMLSELDIDV (102 aa)) constitute a Glutaredoxin domain. Cysteine 80 contacts [2Fe-2S] cluster.

This sequence belongs to the glutaredoxin family. CPYC subfamily.

The protein localises to the cytoplasm. Its function is as follows. May only reduce GSH-thiol disulfides, but not protein disulfides. The polypeptide is Monothiol glutaredoxin-S10 (GRXS10) (Oryza sativa subsp. japonica (Rice)).